Here is a 283-residue protein sequence, read N- to C-terminus: Acyl-coenzyme A diphosphatase FITM2 (283 aa).

Residues 1–11 (MSTRRSSTRAD) show a composition bias toward low complexity. The tract at residues 1–21 (MSTRRSSTRADSTTKRPASPN) is disordered. Residues 1–39 (MSTRRSSTRADSTTKRPASPNSTPNAALGIFVAIARQIL) are Cytoplasmic-facing. Residues 40–60 (FIDARKVALFYLAFVTVLSFI) traverse the membrane as a helical segment. Over 61-81 (ESRIELDSTYYLVQKHSVLNQ) the chain is Lumenal. The chain crosses the membrane as a helical span at residues 82 to 102 (YGVKMGWFWTLVIVGPFIWFS). The Cytoplasmic portion of the chain corresponds to 103-120 (SKAHNRRDRDQPIVDVCR). Residues 121 to 141 (LGVGTACWYFSVQFFHKVLAL) form a helical membrane-spanning segment. Residues 142 to 168 (TSMCDKGRTLTRAQCSEKEGVWTPGYD) lie on the Lumenal side of the membrane. The helical transmembrane segment at 169 to 189 (ISGHCFLMIYSILIITEEAIA) threads the bilayer. Histidine 172 is an active-site residue. Topologically, residues 190 to 219 (YRHYQQVTDAVHQMDGDREEHDRLTRCIQY) are cytoplasmic. A run of 2 helical transmembrane segments spans residues 220–240 (FFVAMLFLHAFWFKQIIISVL) and 241–261 (YYHIFIEEILGAVAAVVCWFV). Residue histidine 243 is part of the active site. Over 262–283 (TYRMLYPAGFLASPIRRTVGRK) the chain is Cytoplasmic.

It belongs to the FIT family. FIT2 subfamily.

The protein resides in the endoplasmic reticulum membrane. The catalysed reaction is an acyl-CoA + H2O = an acyl-4'-phosphopantetheine + adenosine 3',5'-bisphosphate + 2 H(+). Its function is as follows. Fatty acyl-coenzyme A (CoA) diphosphatase that hydrolyzes fatty acyl-CoA to yield acyl-4'-phosphopantetheine and adenosine 3',5'-bisphosphate. Preferentially hydrolyzes unsaturated long-chain acyl-CoA substrates in the endoplasmic reticulum (ER) lumen. This catalytic activity is required for maintaining ER structure and for lipid droplets (LDs) biogenesis, which are lipid storage organelles involved in maintaining lipid and energy homeostasis. May directly bind to diacylglycerol (DAGs) and triacylglycerol, which is also important for LD biogenesis. May support directional budding of nacent LDs from the ER into the cytosol by reducing DAG levels at sites of LD formation. May play a role in the regulation of cell morphology, ER morphology and cytoskeletal organization. The polypeptide is Acyl-coenzyme A diphosphatase FITM2 (Caenorhabditis elegans).